A 330-amino-acid polypeptide reads, in one-letter code: MKKTVLSGVQTTGALHLGNYLGSIKNWVKMQEEYNCFFFLADLHAITIDIKTSELNNSIMEVLAIYLAAGLNPDKVTIFAQSMVKEHAELSWLLNCVTPLGWLKRMTQFKDKAGSDQCKACLGLFAYPILMAADILIYKADIVPVGEDQKQHLELTRDIAEVINRRFDKEILKVPDILISETGTRIMSLRNGLKKMSKSDIADFSRINLKDSNDLIYQKIKKAKTDHLSFISYDKKTRPEISNLLDIYKSLSKESMEKIINNYQNQGFAKFKEDLAEIIITNLQPIRDKCLELMNDKEYLLKILHKGAEKAKIRASETVNEVKKQFGFII.

Residues 10–12 (QTT) and 18–19 (GN) contribute to the ATP site. The 'HIGH' region signature appears at 11-19 (TTGALHLGN). L-tryptophan is bound at residue aspartate 134. Residues 146 to 148 (GED), isoleucine 186, and 195 to 199 (KMSKS) each bind ATP. Positions 195–199 (KMSKS) match the 'KMSKS' region motif.

Belongs to the class-I aminoacyl-tRNA synthetase family. In terms of assembly, homodimer.

It is found in the cytoplasm. The catalysed reaction is tRNA(Trp) + L-tryptophan + ATP = L-tryptophyl-tRNA(Trp) + AMP + diphosphate + H(+). Catalyzes the attachment of tryptophan to tRNA(Trp). This Rickettsia typhi (strain ATCC VR-144 / Wilmington) protein is Tryptophan--tRNA ligase.